Reading from the N-terminus, the 382-residue chain is Anhydro-N-acetylmuramic acid kinase (382 aa).

Position 9-16 (9-16 (GTSLDGID)) interacts with ATP.

Belongs to the anhydro-N-acetylmuramic acid kinase family.

The enzyme catalyses 1,6-anhydro-N-acetyl-beta-muramate + ATP + H2O = N-acetyl-D-muramate 6-phosphate + ADP + H(+). It participates in amino-sugar metabolism; 1,6-anhydro-N-acetylmuramate degradation. Its pathway is cell wall biogenesis; peptidoglycan recycling. In terms of biological role, catalyzes the specific phosphorylation of 1,6-anhydro-N-acetylmuramic acid (anhMurNAc) with the simultaneous cleavage of the 1,6-anhydro ring, generating MurNAc-6-P. Is required for the utilization of anhMurNAc either imported from the medium or derived from its own cell wall murein, and thus plays a role in cell wall recycling. The sequence is that of Anhydro-N-acetylmuramic acid kinase from Bacillus cereus (strain G9842).